Consider the following 109-residue polypeptide: Phosphoribosyl-ATP pyrophosphatase (109 aa).

It belongs to the PRA-PH family.

Its subcellular location is the cytoplasm. It carries out the reaction 1-(5-phospho-beta-D-ribosyl)-ATP + H2O = 1-(5-phospho-beta-D-ribosyl)-5'-AMP + diphosphate + H(+). Its pathway is amino-acid biosynthesis; L-histidine biosynthesis; L-histidine from 5-phospho-alpha-D-ribose 1-diphosphate: step 2/9. This is Phosphoribosyl-ATP pyrophosphatase from Azorhizobium caulinodans (strain ATCC 43989 / DSM 5975 / JCM 20966 / LMG 6465 / NBRC 14845 / NCIMB 13405 / ORS 571).